Here is a 284-residue protein sequence, read N- to C-terminus: Tropomyosin (284 aa).

Disordered stretches follow at residues 1-27 and 99-131; these read MDAI…QMEQ and YERS…KVLE. A coiled-coil region spans residues 1–273; that stretch reads MDAIKKKMQA…KERYKAISDD (273 aa). The segment covering 102–131 has biased composition (basic and acidic residues); it reads SEEKLNSTTEKLEEASKAADESERNRKVLE.

Belongs to the tropomyosin family. In terms of assembly, homodimer.

Its function is as follows. Tropomyosin, in association with the troponin complex, plays a central role in the calcium dependent regulation of muscle contraction. This Mimachlamys nobilis (Noble scallop) protein is Tropomyosin.